Reading from the N-terminus, the 216-residue chain is Eukaryotic translation initiation factor 3 subunit K (216 aa).

In terms of domain architecture, PCI spans 40-202 (YDLDANLAVL…HIKSKNIAEK (163 aa)).

This sequence belongs to the eIF-3 subunit K family. In terms of assembly, component of the eukaryotic translation initiation factor 3 (eIF-3) complex.

The protein resides in the cytoplasm. Functionally, component of the eukaryotic translation initiation factor 3 (eIF-3) complex, which is involved in protein synthesis of a specialized repertoire of mRNAs and, together with other initiation factors, stimulates binding of mRNA and methionyl-tRNAi to the 40S ribosome. The eIF-3 complex specifically targets and initiates translation of a subset of mRNAs involved in cell proliferation. This chain is Eukaryotic translation initiation factor 3 subunit K, found in Nematostella vectensis (Starlet sea anemone).